The following is a 148-amino-acid chain: UPF0251 protein Cbei_2962 (148 aa).

The protein belongs to the UPF0251 family.

This chain is UPF0251 protein Cbei_2962, found in Clostridium beijerinckii (strain ATCC 51743 / NCIMB 8052) (Clostridium acetobutylicum).